We begin with the raw amino-acid sequence, 461 residues long: Interleukin-1 receptor-associated kinase 4 (461 aa).

Position 1 is an N-acetylmethionine (Met-1). One can recognise a Death domain in the interval 20 to 104; the sequence is RKLSDFIDPQ…APASLLLPDA (85 aa). N6-acetyllysine is present on Lys-34. The Protein kinase domain occupies 187 to 455; the sequence is SVGGNKMGEG…PDIKKVQQLL (269 aa). ATP contacts are provided by residues 193–201 and Lys-214; that span reads MGEGGFGVV. The active-site Proton acceptor is the Asp-312. ATP contacts are provided by residues 314 to 317 and Asp-330; that span reads KSAN. 2 positions are modified to phosphothreonine: Thr-343 and Thr-346. Ser-347 carries the phosphoserine modification.

The protein belongs to the protein kinase superfamily. TKL Ser/Thr protein kinase family. Pelle subfamily. As to quaternary structure, associates with MYD88 and IRAK2 to form a ternary complex called the Myddosome. Once phosphorylated, IRAK4 dissociates from the receptor complex and then associates with the TNF receptor-associated factor 6 (TRAF6), IRAK1, and PELI1; this intermediate complex is required for subsequent NF-kappa-B activation. Direct binding of SMAD6 to PELI1 prevents complex formation and hence negatively regulates IL1R-TLR signaling and eventually NF-kappa-B-mediated gene expression. Interacts with IL1RL1. Interacts (when phosphorylated) with IRAK1. May interact (when phosphorylated) with IRAK3. It depends on Mg(2+) as a cofactor. Phosphorylated.

The protein resides in the cytoplasm. The catalysed reaction is L-seryl-[protein] + ATP = O-phospho-L-seryl-[protein] + ADP + H(+). The enzyme catalyses L-threonyl-[protein] + ATP = O-phospho-L-threonyl-[protein] + ADP + H(+). Functionally, serine/threonine-protein kinase that plays a critical role in initiating innate immune response against foreign pathogens. Involved in Toll-like receptor (TLR) and IL-1R signaling pathways. Is rapidly recruited by MYD88 to the receptor-signaling complex upon TLR activation to form the Myddosome together with IRAK2. Phosphorylates initially IRAK1, thus stimulating the kinase activity and intensive autophosphorylation of IRAK1. Phosphorylates E3 ubiquitin ligases Pellino proteins (PELI1, PELI2 and PELI3) to promote pellino-mediated polyubiquitination of IRAK1. Then, the ubiquitin-binding domain of IKBKG/NEMO binds to polyubiquitinated IRAK1 bringing together the IRAK1-MAP3K7/TAK1-TRAF6 complex and the NEMO-IKKA-IKKB complex. In turn, MAP3K7/TAK1 activates IKKs (CHUK/IKKA and IKBKB/IKKB) leading to NF-kappa-B nuclear translocation and activation. Alternatively, phosphorylates TIRAP to promote its ubiquitination and subsequent degradation. Phosphorylates NCF1 and regulates NADPH oxidase activation after LPS stimulation suggesting a similar mechanism during microbial infections. This Bos taurus (Bovine) protein is Interleukin-1 receptor-associated kinase 4 (IRAK4).